Consider the following 569-residue polypeptide: Aspartokinase 1, chloroplastic (569 aa).

The N-terminal 90 residues, 1–90 (MAATRVRCCH…VDEKGITCVM (90 aa)), are a transit peptide targeting the chloroplast. ATP contacts are provided by K91, G94, and S123. E207 contributes to the substrate binding site. 2 consecutive ACT domains span residues 405 to 483 (IAST…AIIS) and 484 to 560 (LIGN…GNGS). L-lysine-binding residues include Q413 and G415. S430 contributes to the S-adenosyl-L-methionine binding site. 3 residues coordinate L-lysine: V431, D432, and S437. Positions 452 and 453 each coordinate S-adenosyl-L-methionine.

Belongs to the aspartokinase family. As to quaternary structure, homodimer.

The protein resides in the plastid. It is found in the chloroplast. It carries out the reaction L-aspartate + ATP = 4-phospho-L-aspartate + ADP. It functions in the pathway amino-acid biosynthesis; L-lysine biosynthesis via DAP pathway; (S)-tetrahydrodipicolinate from L-aspartate: step 1/4. It participates in amino-acid biosynthesis; L-methionine biosynthesis via de novo pathway; L-homoserine from L-aspartate: step 1/3. Its pathway is amino-acid biosynthesis; L-threonine biosynthesis; L-threonine from L-aspartate: step 1/5. Its activity is regulated as follows. Inhibited by S-adenosyl-L-methionine (SAM) and lysine in a synergistic manner. No inhibition by threonine, leucine or SAM alone, and no activation or inhibition by alanine, cysteine, isoleucine, serine, valine, methionine, glutamine, asparagine, glutamic acid or arginine. In terms of biological role, involved in the first step of essential amino acids lysine, threonine, methionine and isoleucine synthesis via the aspartate-family pathway. In Arabidopsis thaliana (Mouse-ear cress), this protein is Aspartokinase 1, chloroplastic (AK1).